We begin with the raw amino-acid sequence, 123 residues long: S-adenosylmethionine decarboxylase proenzyme 2 (123 aa).

S65 functions as the Schiff-base intermediate with substrate; via pyruvic acid in the catalytic mechanism. S65 carries the post-translational modification Pyruvic acid (Ser); by autocatalysis. The active-site Proton acceptor; for processing activity is the H70. The Proton donor; for catalytic activity role is filled by C85.

Belongs to the prokaryotic AdoMetDC family. Type 1 subfamily. Heterotetramer of two alpha and two beta chains arranged as a dimer of alpha/beta heterodimers. The cofactor is pyruvate. Post-translationally, is synthesized initially as an inactive proenzyme. Formation of the active enzyme involves a self-maturation process in which the active site pyruvoyl group is generated from an internal serine residue via an autocatalytic post-translational modification. Two non-identical subunits are generated from the proenzyme in this reaction, and the pyruvate is formed at the N-terminus of the alpha chain, which is derived from the carboxyl end of the proenzyme. The post-translation cleavage follows an unusual pathway, termed non-hydrolytic serinolysis, in which the side chain hydroxyl group of the serine supplies its oxygen atom to form the C-terminus of the beta chain, while the remainder of the serine residue undergoes an oxidative deamination to produce ammonia and the pyruvoyl group blocking the N-terminus of the alpha chain.

The catalysed reaction is S-adenosyl-L-methionine + H(+) = S-adenosyl 3-(methylsulfanyl)propylamine + CO2. Its pathway is amine and polyamine biosynthesis; S-adenosylmethioninamine biosynthesis; S-adenosylmethioninamine from S-adenosyl-L-methionine: step 1/1. Functionally, catalyzes the decarboxylation of S-adenosylmethionine to S-adenosylmethioninamine (dcAdoMet), the propylamine donor required for the synthesis of the polyamines spermine and spermidine from the diamine putrescine. The polypeptide is S-adenosylmethionine decarboxylase proenzyme 2 (Bacillus cereus (strain ATCC 14579 / DSM 31 / CCUG 7414 / JCM 2152 / NBRC 15305 / NCIMB 9373 / NCTC 2599 / NRRL B-3711)).